The chain runs to 815 residues: MQEQYNPQQIEQAAQSFWDENKVFKAIADSSKEKFYCLSMFPYPSGRLHMGHVRNYTIGDVISRYQRMQGKNVLQPMGWDAFGLPAENAAIKHKTAPAKWTTENIAYMKGQLKELGFGYDWDREIATCTPEYYKWEQWFFTQLVEKGLAYKKTAAVNWCPEDQTVLANEQVEDGCCWRCGTNVEKKEISQWFIRITDYAEELLNDLDQLDGWPEKVKAMQRNWIGRSEGLEFSFAVEGKDERLSVYTTRPDTIMGVTYVAVATQHPLSLEASANNADLAAFIEESKKMSTTEADMATVEKKGMDTGFKAIHPITGEAVPVYAANFVLMDYGSGAVMSVPAHDQRDFEFAKKYNLAIKQVVQPAGDEVIDLEKAAFTEKGVLCNSGEFDGLAFKEAFDAIAAWMVERNLGEVKVNYRLRDWGVSRQRYWGTPIPTINLKDGSVVPVPQDQLPVELPTDVIMDGVNSPIKNNPDFSSIMFNGEEAERETDTFDTFMESSWYFARYCCPDSTDAMLTEEANYWLPVDQYVGGVEHAILHLLYSRFFHKLLRDAGLVNSDEPFKRLLTQGMVNKDGTKMSKSKGNTVDPQEMIEKYGADTVRLFMMFSAPPEQSLEWNDAGVDGASRFLRRLWALSYRHTNAGKVGELNIAELNGAQKALRRKTHETIQKVSDDIERRQTFNTAIAAVMELCNEISKFEDSSELGLAVEQEALEAATLLLSPIVPHIAHQLWSELGHSDNIVNTPWPTLDEEALIKDELTIVVQVLGKKRAELTVSANADNKTIEAEALAHPSVAKLLEGKTVRKVIVVPGRLVNIVAN.

The short motif at 42–52 (PYPSGRLHMGH) is the 'HIGH' region element. Residues 574 to 578 (KMSKS) carry the 'KMSKS' region motif. Lysine 577 is a binding site for ATP.

This sequence belongs to the class-I aminoacyl-tRNA synthetase family.

The protein resides in the cytoplasm. It catalyses the reaction tRNA(Leu) + L-leucine + ATP = L-leucyl-tRNA(Leu) + AMP + diphosphate. The polypeptide is Leucine--tRNA ligase (Marinomonas sp. (strain MWYL1)).